A 262-amino-acid polypeptide reads, in one-letter code: Phosphonates import ATP-binding protein PhnC (262 aa).

Residues 5-253 (IRVEKLAKTF…RFDHLYRSIN (249 aa)) form the ABC transporter domain. 37–44 (GPSGSGKS) is a binding site for ATP.

It belongs to the ABC transporter superfamily. Phosphonates importer (TC 3.A.1.9.1) family. The complex is composed of two ATP-binding proteins (PhnC), two transmembrane proteins (PhnE) and a solute-binding protein (PhnD).

It localises to the cell inner membrane. The enzyme catalyses phosphonate(out) + ATP + H2O = phosphonate(in) + ADP + phosphate + H(+). Its function is as follows. Part of the ABC transporter complex PhnCDE involved in phosphonates, phosphate esters, phosphite and phosphate import. Responsible for energy coupling to the transport system. This chain is Phosphonates import ATP-binding protein PhnC, found in Escherichia coli (strain K12).